A 182-amino-acid polypeptide reads, in one-letter code: MTELANIPELLASRIRDVADYPEPGVMFKDITPLLADPVAFTALTDTLAAGRRRHPRTKVVGLEARGFILGAPVAVRAGLGFIPVRKAGKLPGATLSQAYDLEYGSAEIEVHAEDLAAGDRVLIVDDVLATGGTAEAAIQLIRRAGAEVCGLAVLMELGFLGGRARLEPILDGAPLEALLQV.

It belongs to the purine/pyrimidine phosphoribosyltransferase family. Homodimer.

It localises to the cytoplasm. The enzyme catalyses AMP + diphosphate = 5-phospho-alpha-D-ribose 1-diphosphate + adenine. The protein operates within purine metabolism; AMP biosynthesis via salvage pathway; AMP from adenine: step 1/1. Catalyzes a salvage reaction resulting in the formation of AMP, that is energically less costly than de novo synthesis. The chain is Adenine phosphoribosyltransferase from Streptomyces galbus.